Consider the following 443-residue polypeptide: 3-phosphoshikimate 1-carboxyvinyltransferase (443 aa).

The 3-phosphoshikimate site is built by K25, S26, and R30. K25 contacts phosphoenolpyruvate. G117 and R145 together coordinate phosphoenolpyruvate. S188, S189, Q190, S217, E331, and H358 together coordinate 3-phosphoshikimate. Q190 contributes to the phosphoenolpyruvate binding site. The active-site Proton acceptor is E331. Phosphoenolpyruvate-binding residues include R362, R404, and K428.

The protein belongs to the EPSP synthase family. As to quaternary structure, monomer.

The protein resides in the cytoplasm. The catalysed reaction is 3-phosphoshikimate + phosphoenolpyruvate = 5-O-(1-carboxyvinyl)-3-phosphoshikimate + phosphate. It participates in metabolic intermediate biosynthesis; chorismate biosynthesis; chorismate from D-erythrose 4-phosphate and phosphoenolpyruvate: step 6/7. Catalyzes the transfer of the enolpyruvyl moiety of phosphoenolpyruvate (PEP) to the 5-hydroxyl of shikimate-3-phosphate (S3P) to produce enolpyruvyl shikimate-3-phosphate and inorganic phosphate. The sequence is that of 3-phosphoshikimate 1-carboxyvinyltransferase from Tropheryma whipplei (strain TW08/27) (Whipple's bacillus).